The chain runs to 93 residues: Alpha-defensin 9 (93 aa).

The first 19 residues, 1–19 (MKTLVLLSALVLLAFQVQA), serve as a signal peptide directing secretion. Residues 20–58 (DPIQNTDEETKTEEQPGEEDQAVSVSFGDPEGSSLQEES) constitute a propeptide that is removed on maturation. Residues 23-56 (QNTDEETKTEEQPGEEDQAVSVSFGDPEGSSLQE) form a disordered region. 3 disulfides stabilise this stretch: Cys64/Cys92, Cys66/Cys81, and Cys71/Cys91.

This sequence belongs to the alpha-defensin family. As to expression, paneth cells of the small bowel.

It is found in the secreted. Functionally, probably contributes to the antimicrobial barrier function of the small bowel mucosa. This chain is Alpha-defensin 9 (Defa9), found in Mus musculus (Mouse).